The sequence spans 225 residues: 3-dehydroquinate dehydratase (225 aa).

Residues 30-32 and Arg-62 contribute to the 3-dehydroquinate site; that span reads EWR. His-118 functions as the Proton donor/acceptor in the catalytic mechanism. Catalysis depends on Lys-143, which acts as the Schiff-base intermediate with substrate. The 3-dehydroquinate site is built by Arg-186, Ser-205, and Gln-209.

Belongs to the type-I 3-dehydroquinase family. As to quaternary structure, homodimer.

It catalyses the reaction 3-dehydroquinate = 3-dehydroshikimate + H2O. It participates in metabolic intermediate biosynthesis; chorismate biosynthesis; chorismate from D-erythrose 4-phosphate and phosphoenolpyruvate: step 3/7. Its function is as follows. Involved in the third step of the chorismate pathway, which leads to the biosynthesis of aromatic amino acids. Catalyzes the cis-dehydration of 3-dehydroquinate (DHQ) and introduces the first double bond of the aromatic ring to yield 3-dehydroshikimate. This chain is 3-dehydroquinate dehydratase, found in Streptococcus mutans serotype c (strain ATCC 700610 / UA159).